A 159-amino-acid polypeptide reads, in one-letter code: Ribosomal RNA large subunit methyltransferase H (159 aa).

S-adenosyl-L-methionine-binding positions include Leu76, Gly108, and 127-132 (FSKMTF).

It belongs to the RNA methyltransferase RlmH family. In terms of assembly, homodimer.

The protein resides in the cytoplasm. It catalyses the reaction pseudouridine(1915) in 23S rRNA + S-adenosyl-L-methionine = N(3)-methylpseudouridine(1915) in 23S rRNA + S-adenosyl-L-homocysteine + H(+). Specifically methylates the pseudouridine at position 1915 (m3Psi1915) in 23S rRNA. The protein is Ribosomal RNA large subunit methyltransferase H of Halalkalibacterium halodurans (strain ATCC BAA-125 / DSM 18197 / FERM 7344 / JCM 9153 / C-125) (Bacillus halodurans).